The chain runs to 61 residues: Small ribosomal subunit protein uS14 (61 aa).

The Zn(2+) site is built by Cys-24, Cys-27, Cys-40, and Cys-43.

Belongs to the universal ribosomal protein uS14 family. Zinc-binding uS14 subfamily. Part of the 30S ribosomal subunit. Contacts proteins S3 and S10. Zn(2+) is required as a cofactor.

Its function is as follows. Binds 16S rRNA, required for the assembly of 30S particles and may also be responsible for determining the conformation of the 16S rRNA at the A site. The chain is Small ribosomal subunit protein uS14 from Streptococcus pyogenes serotype M49 (strain NZ131).